The chain runs to 349 residues: 4-hydroxy-2-oxovalerate aldolase 2 (349 aa).

Residues 12-264 (VRMTDTSLRD…KTGIDFFDIA (253 aa)) form the Pyruvate carboxyltransferase domain. 20-21 (RD) provides a ligand contact to substrate. D21 contacts Mn(2+). H24 (proton acceptor) is an active-site residue. Substrate contacts are provided by S174 and H203. H203 and H205 together coordinate Mn(2+). Y294 is a binding site for substrate.

It belongs to the 4-hydroxy-2-oxovalerate aldolase family.

The catalysed reaction is (S)-4-hydroxy-2-oxopentanoate = acetaldehyde + pyruvate. In Mycolicibacterium smegmatis (strain ATCC 700084 / mc(2)155) (Mycobacterium smegmatis), this protein is 4-hydroxy-2-oxovalerate aldolase 2 (bphI-2).